We begin with the raw amino-acid sequence, 101 residues long: Alkene monooxygenase system, effector subunit (101 aa).

The protein belongs to the TmoD/XamoD family. Monomer. The alkene monooxygenase multicomponent enzyme system is composed of an electron transfer component and a monooxygenase component interacting with the effector protein XamoD. The electron transfer component is composed of a ferredoxin reductase (XamoF) and a ferredoxin (XamoC), and the monooxygenase component is formed by a heterohexamer (dimer of heterotrimers) of two alpha subunits (XamoA), two beta subunits (XamoE) and two gamma subunits (XamoB).

The protein resides in the cytoplasm. Functionally, effector component of the alkene monooxygenase multicomponent enzyme system which catalyzes the O2- and NADH-dependent epoxidation of short chain (C2 to C6) alkenes to their corresponding epoxides. One possible role of this small protein might be to facilitate electron transfer between the reductase and ferredoxin components. The sequence is that of Alkene monooxygenase system, effector subunit from Xanthobacter autotrophicus (strain ATCC BAA-1158 / Py2).